Here is a 136-residue protein sequence, read N- to C-terminus: Sec-independent protein translocase protein TatB (136 aa).

Residues Met-1–Gly-21 form a helical membrane-spanning segment. The interval Ala-66–Glu-136 is disordered. Composition is skewed to basic and acidic residues over residues Glu-77 to Ala-89 and Tyr-96 to Leu-107. Over residues Asp-108–Pro-130 the composition is skewed to polar residues.

It belongs to the TatB family. As to quaternary structure, the Tat system comprises two distinct complexes: a TatABC complex, containing multiple copies of TatA, TatB and TatC subunits, and a separate TatA complex, containing only TatA subunits. Substrates initially bind to the TatABC complex, which probably triggers association of the separate TatA complex to form the active translocon.

The protein localises to the cell inner membrane. Part of the twin-arginine translocation (Tat) system that transports large folded proteins containing a characteristic twin-arginine motif in their signal peptide across membranes. Together with TatC, TatB is part of a receptor directly interacting with Tat signal peptides. TatB may form an oligomeric binding site that transiently accommodates folded Tat precursor proteins before their translocation. The polypeptide is Sec-independent protein translocase protein TatB (Psychromonas ingrahamii (strain DSM 17664 / CCUG 51855 / 37)).